A 385-amino-acid polypeptide reads, in one-letter code: Acyl-CoA dehydrogenase IpdE1 (385 aa).

Residues Gln-126 to Ser-129 and Ser-161 contribute to the FAD site. The active-site Proton acceptor is Glu-244. Ser-364–Glu-366 lines the FAD pocket.

The protein belongs to the acyl-CoA dehydrogenase family. Heterotetramer composed of 2 IpdE1 subunits and 2 IpdE2 subunits. It depends on FAD as a cofactor.

The catalysed reaction is 3-[(3aS,4S,5R,7aS)-5-hydroxy-7a-methyl-1-oxo-octahydro-1H-inden-4-yl]propanoyl-CoA + A = (2E)-3-[(3aS,4S,5R,7aS)-5-hydroxy-7a-methyl-1-oxo-octahydro-1H-inden-4-yl]prop-2-enoyl-CoA + AH2. Its pathway is steroid metabolism; cholesterol degradation. In terms of biological role, involved in cholesterol degradation. Catalyzes the dehydrogenation of 5OH-HIP-CoA to 5OH-HIPE-CoA. Can also use octanoyl-CoA and dihydroferuloyl-CoA, with lower efficiency. Cannot use 3-oxo-4-pregnene-20-carboxyl-CoA (3-OPC-CoA). This Mycobacterium tuberculosis (strain ATCC 25618 / H37Rv) protein is Acyl-CoA dehydrogenase IpdE1.